A 40-amino-acid chain; its full sequence is Putative protein FAM86JP (40 aa).

The disordered stretch occupies residues 1–40 (MPGAFSQNSSKRRAVLPRSHRVAGRGPAEAGCLPGAPAGS). A compositionally biased stretch (basic residues) spans 10 to 23 (SKRRAVLPRSHRVA).

This Homo sapiens (Human) protein is Putative protein FAM86JP.